Consider the following 119-residue polypeptide: Large ribosomal subunit protein uL18 (119 aa).

The protein belongs to the universal ribosomal protein uL18 family. In terms of assembly, part of the 50S ribosomal subunit; part of the 5S rRNA/L5/L18/L25 subcomplex. Contacts the 5S and 23S rRNAs.

In terms of biological role, this is one of the proteins that bind and probably mediate the attachment of the 5S RNA into the large ribosomal subunit, where it forms part of the central protuberance. The chain is Large ribosomal subunit protein uL18 from Solibacter usitatus (strain Ellin6076).